The following is a 984-amino-acid chain: uncharacterized protein (984 aa).

Residues 941–984 (FGPSGPGPNQGPGDDYNNFKSTKYPRNGYNKYQPNNRIHSRNRY) are disordered.

The protein localises to the virion. This is an uncharacterized protein from Acanthamoeba polyphaga (Amoeba).